We begin with the raw amino-acid sequence, 161 residues long: Copper transporter 1 (161 aa).

A run of 2 helical transmembrane segments spans residues 55 to 75 and 109 to 129; these read GGMYALALIFVFALAVIVEFL and VAYLLMLALMSFNGGVFLVAV.

The protein belongs to the copper transporter (Ctr) (TC 1.A.56) family. SLC31A subfamily. Self-interacts. Interacts with SWEET11 and COPT2.

Its subcellular location is the cell membrane. In terms of biological role, involved in the transport of copper, in cooperation with SWEET11 and COPT2. Contributes to the removal of copper (Cu) from xylem, and thus to the sensitivity toward bacterial pathogens such as X.oryzae pv. oryzae (Xoo). This Oryza sativa subsp. japonica (Rice) protein is Copper transporter 1 (COPT1).